A 335-amino-acid polypeptide reads, in one-letter code: DNA-directed RNA polymerase subunit alpha (335 aa).

The interval 1–233 (MIRDEISVSI…DLFIPFLHGE (233 aa)) is alpha N-terminal domain (alpha-NTD). Residues 264–335 (KEKIAFQLIF…KLFAIDPPRN (72 aa)) form an alpha C-terminal domain (alpha-CTD) region.

The protein belongs to the RNA polymerase alpha chain family. In terms of assembly, in plastids the minimal PEP RNA polymerase catalytic core is composed of four subunits: alpha, beta, beta', and beta''. When a (nuclear-encoded) sigma factor is associated with the core the holoenzyme is formed, which can initiate transcription.

Its subcellular location is the plastid. The protein localises to the chloroplast. It catalyses the reaction RNA(n) + a ribonucleoside 5'-triphosphate = RNA(n+1) + diphosphate. Its function is as follows. DNA-dependent RNA polymerase catalyzes the transcription of DNA into RNA using the four ribonucleoside triphosphates as substrates. The sequence is that of DNA-directed RNA polymerase subunit alpha from Pinus thunbergii (Japanese black pine).